Consider the following 463-residue polypeptide: Quinolone resistance protein NorB (463 aa).

The next 14 membrane-spanning stretches (helical) occupy residues 19–39, 53–73, 86–106, 107–127, 142–162, 165–185, 201–221, 230–250, 273–293, 299–319, 334–354, 357–377, 403–423, and 435–455; these read IVLS…VVLI, IAVS…GGLA, IILN…LLLI, IGRL…LSII, YWSI…GAVA, LGWR…LFLI, FDIK…ILIT, SLLF…FIVL, TASN…NTFV, YSLL…LIMI, PMLI…LTFL, ILYV…LGIY, MASA…YAIV, and IALW…LLLV.

This sequence belongs to the major facilitator superfamily. TCR/Tet family.

It is found in the cell membrane. Multidrug efflux pump that acts independently of NorA and is one of the factors that confers resistance against diverse quinolones and chemical compounds. The chain is Quinolone resistance protein NorB (norB) from Staphylococcus aureus (strain bovine RF122 / ET3-1).